The sequence spans 550 residues: MTPADLSQLIKQTAIDVLSARELDTTVLPETVVVERPRNPEHGDYATNVALQIAKKVGMNPRELGQVLADSLAANTAIDEASIAGPGFINIRLAAAAQGEIVAKILEAGATFGHSDLYQGRRVNLEFVSANPTGPIHLGGTRWAAVGDSLGRVLEASGAQVTREYYFNDHGRQIDRFTNSLVASAKGEPTPEDGYGGDYIKEIADAVVAQHPDVLALAEADLNERFRATGVEMMFAHIKESLHEFGTDFDVYFHENSLFESGAVDKAIQTLKDNGNLYFNEGAWWLKSSEYGDDKDRVVIKSDGDAAYIAGDIAYVADKFDRGHDLCIYMLGADHHGYISRLRAAAAAMGYEPSNVEVLIGQMVNLVRDGKAVRMSKRAGTVITLDDLVEAIGIDGARYSMIRSSVDSSLDIDLQLWEQQSSDNPVYYVQYGHARLCSIARKAADLGITAIDPDLSLLTHDREGDLIRTLGEFPAVVKAAAELREPHRIARFAEDLAGTFHRFYDSCQILPKVGESAEPIHTARLALANATRQVLANALRLVGVSAPERM.

The short motif at 130 to 140 (ANPTGPIHLGG) is the 'HIGH' region element.

The protein belongs to the class-I aminoacyl-tRNA synthetase family. In terms of assembly, monomer.

The protein resides in the cytoplasm. It catalyses the reaction tRNA(Arg) + L-arginine + ATP = L-arginyl-tRNA(Arg) + AMP + diphosphate. The protein is Arginine--tRNA ligase of Corynebacterium diphtheriae (strain ATCC 700971 / NCTC 13129 / Biotype gravis).